The primary structure comprises 225 residues: MLWIFTEKMGKITAIAKGAKKSKSKLFSLTHPLCYGDYLLFKGKGLYRLSEGKIRTSFQTSLTDLEKLTYASYLCELIDISLQDEEENFNLYKEFITCLYLINTEAISYELLIRAFELKLLKYTGYGLRFDNCVFCKNKLSVSNYISLRYFGGVCDKCPKEHGLYINKATYNALRFLNNTSLDKVYRLTLTEEVKAELFKVTSFIISSVYSRKPKSLEMLKFIKE.

The protein belongs to the RecO family.

Its function is as follows. Involved in DNA repair and RecF pathway recombination. This Clostridium perfringens (strain ATCC 13124 / DSM 756 / JCM 1290 / NCIMB 6125 / NCTC 8237 / Type A) protein is DNA repair protein RecO.